Here is a 326-residue protein sequence, read N- to C-terminus: tRNA-cytidine(32) 2-sulfurtransferase (326 aa).

The PP-loop motif motif lies at 63 to 68 (SGGKDS). Positions 138, 141, and 229 each coordinate [4Fe-4S] cluster.

This sequence belongs to the TtcA family. As to quaternary structure, homodimer. The cofactor is Mg(2+). [4Fe-4S] cluster serves as cofactor.

The protein localises to the cytoplasm. It carries out the reaction cytidine(32) in tRNA + S-sulfanyl-L-cysteinyl-[cysteine desulfurase] + AH2 + ATP = 2-thiocytidine(32) in tRNA + L-cysteinyl-[cysteine desulfurase] + A + AMP + diphosphate + H(+). The protein operates within tRNA modification. Catalyzes the ATP-dependent 2-thiolation of cytidine in position 32 of tRNA, to form 2-thiocytidine (s(2)C32). The sulfur atoms are provided by the cysteine/cysteine desulfurase (IscS) system. The chain is tRNA-cytidine(32) 2-sulfurtransferase from Leptothrix cholodnii (strain ATCC 51168 / LMG 8142 / SP-6) (Leptothrix discophora (strain SP-6)).